Reading from the N-terminus, the 86-residue chain is Large ribosomal subunit protein bL31B (86 aa).

Belongs to the bacterial ribosomal protein bL31 family. Type B subfamily. Part of the 50S ribosomal subunit.

The chain is Large ribosomal subunit protein bL31B from Saccharopolyspora erythraea (strain ATCC 11635 / DSM 40517 / JCM 4748 / NBRC 13426 / NCIMB 8594 / NRRL 2338).